The following is a 125-amino-acid chain: Small ribosomal subunit protein eS8 (125 aa).

Residues 1 to 34 (MQWQGRSVRKSTGGRYSPSRGKRRREIGSAPAET) are disordered.

Belongs to the eukaryotic ribosomal protein eS8 family. As to quaternary structure, part of the 30S ribosomal subunit.

In Methanospirillum hungatei JF-1 (strain ATCC 27890 / DSM 864 / NBRC 100397 / JF-1), this protein is Small ribosomal subunit protein eS8.